A 170-amino-acid chain; its full sequence is Small ribosomal subunit protein bS18c (170 aa).

Positions 1-61 are disordered; the sequence is MYTSKQPFLK…RRPRIGPGDR (61 aa). The span at 13–26 shows a compositional bias: polar residues; it reads QPFSKSKQTFNKSK. The segment covering 27-55 has biased composition (basic residues); the sequence is QPFRKSKQTFRKFKQPFRKSKQPFRRRPR.

This sequence belongs to the bacterial ribosomal protein bS18 family. As to quaternary structure, part of the 30S ribosomal subunit.

The protein localises to the plastid. Its subcellular location is the chloroplast. The protein is Small ribosomal subunit protein bS18c of Hordeum vulgare (Barley).